Here is a 435-residue protein sequence, read N- to C-terminus: Nuclear distribution protein nudF 2 (435 aa).

The region spanning 9–41 is the LisH domain; that stretch reads QAEELHKSIIAYLSANGLPETTAILRKELGVTE. 8 WD repeats span residues 86–125, 128–171, 175–214, 217–256, 280–320, 322–361, 366–396, and 397–434; these read SHRDTINCIAFHPKYSSIASGSDDCTIKIWDWELGELEVT, GHTR…KNIR, GHDHIVSAVRFIPNGSLLASASRDMDVRLWDVTNGYCVKT, GHTGWVRDVCASLDGRFILSTGDDMTVRLWDISAKPENKL, APLA…LMTL, GHDNWVRAIVFHPGGRYLLSVSDDKTLRCWDLSQEGKCVK, THGGFITCLRWAPAILKDTPTDAARALVRQI, and PDVAEIMKNATFEESFSDVQIRCVVATGSVDKKLQIFA.

This sequence belongs to the WD repeat LIS1/nudF family. As to quaternary structure, self-associates. Interacts with nudE and dynein.

The protein localises to the cytoplasm. The protein resides in the cytoskeleton. It localises to the spindle pole. In terms of biological role, positively regulates the activity of the minus-end directed microtubule motor protein dynein. May enhance dynein-mediated microtubule sliding by targeting dynein to the microtubule plus end. Required for nuclear migration during vegetative growth as well as development. Required for retrograde early endosome (EE) transport from the hyphal tip. Required for localization of dynein to the mitotic spindle poles. Recruits additional proteins to the dynein complex at SPBs. The sequence is that of Nuclear distribution protein nudF 2 from Aspergillus clavatus (strain ATCC 1007 / CBS 513.65 / DSM 816 / NCTC 3887 / NRRL 1 / QM 1276 / 107).